Here is a 256-residue protein sequence, read N- to C-terminus: 5'-nucleotidase SurE (256 aa).

Residues D9, D10, S42, and N99 each coordinate a divalent metal cation.

This sequence belongs to the SurE nucleotidase family. A divalent metal cation serves as cofactor.

It localises to the cytoplasm. It catalyses the reaction a ribonucleoside 5'-phosphate + H2O = a ribonucleoside + phosphate. Functionally, nucleotidase that shows phosphatase activity on nucleoside 5'-monophosphates. This chain is 5'-nucleotidase SurE, found in Symbiobacterium thermophilum (strain DSM 24528 / JCM 14929 / IAM 14863 / T).